We begin with the raw amino-acid sequence, 327 residues long: Aspartate carbamoyltransferase catalytic subunit (327 aa).

Residues R73 and T74 each coordinate carbamoyl phosphate. K101 is a binding site for L-aspartate. Carbamoyl phosphate-binding residues include R123, H153, and Q156. L-aspartate contacts are provided by R186 and R241. Residues G282 and P283 each contribute to the carbamoyl phosphate site.

It belongs to the aspartate/ornithine carbamoyltransferase superfamily. ATCase family. In terms of assembly, heterododecamer (2C3:3R2) of six catalytic PyrB chains organized as two trimers (C3), and six regulatory PyrI chains organized as three dimers (R2).

It catalyses the reaction carbamoyl phosphate + L-aspartate = N-carbamoyl-L-aspartate + phosphate + H(+). It participates in pyrimidine metabolism; UMP biosynthesis via de novo pathway; (S)-dihydroorotate from bicarbonate: step 2/3. Its function is as follows. Catalyzes the condensation of carbamoyl phosphate and aspartate to form carbamoyl aspartate and inorganic phosphate, the committed step in the de novo pyrimidine nucleotide biosynthesis pathway. The protein is Aspartate carbamoyltransferase catalytic subunit of Acidithiobacillus ferrooxidans (strain ATCC 23270 / DSM 14882 / CIP 104768 / NCIMB 8455) (Ferrobacillus ferrooxidans (strain ATCC 23270)).